Reading from the N-terminus, the 637-residue chain is Chaperone protein DnaK (637 aa).

Threonine 203 bears the Phosphothreonine; by autocatalysis mark. The interval 600-637 is disordered; it reads SAVYGQQQEQGAPAQEEPSAEGKKNDDEGTVEGEFREV. Positions 604–616 are enriched in low complexity; sequence GQQQEQGAPAQEE. A compositionally biased stretch (basic and acidic residues) spans 619 to 637; it reads AEGKKNDDEGTVEGEFREV.

It belongs to the heat shock protein 70 family.

In terms of biological role, acts as a chaperone. The protein is Chaperone protein DnaK of Dehalococcoides mccartyi (strain ATCC BAA-2266 / KCTC 15142 / 195) (Dehalococcoides ethenogenes (strain 195)).